Consider the following 281-residue polypeptide: ATP synthase gamma chain (281 aa).

This sequence belongs to the ATPase gamma chain family. As to quaternary structure, F-type ATPases have 2 components, CF(1) - the catalytic core - and CF(0) - the membrane proton channel. CF(1) has five subunits: alpha(3), beta(3), gamma(1), delta(1), epsilon(1). CF(0) has three main subunits: a, b and c.

It localises to the cell inner membrane. In terms of biological role, produces ATP from ADP in the presence of a proton gradient across the membrane. The gamma chain is believed to be important in regulating ATPase activity and the flow of protons through the CF(0) complex. This chain is ATP synthase gamma chain, found in Ehrlichia chaffeensis (strain ATCC CRL-10679 / Arkansas).